The sequence spans 280 residues: Putative pyruvate, phosphate dikinase regulatory protein (280 aa).

152-159 (GISRTSKT) contacts ADP.

It belongs to the pyruvate, phosphate/water dikinase regulatory protein family. PDRP subfamily.

The catalysed reaction is N(tele)-phospho-L-histidyl/L-threonyl-[pyruvate, phosphate dikinase] + ADP = N(tele)-phospho-L-histidyl/O-phospho-L-threonyl-[pyruvate, phosphate dikinase] + AMP + H(+). It carries out the reaction N(tele)-phospho-L-histidyl/O-phospho-L-threonyl-[pyruvate, phosphate dikinase] + phosphate + H(+) = N(tele)-phospho-L-histidyl/L-threonyl-[pyruvate, phosphate dikinase] + diphosphate. Functionally, bifunctional serine/threonine kinase and phosphorylase involved in the regulation of the pyruvate, phosphate dikinase (PPDK) by catalyzing its phosphorylation/dephosphorylation. The sequence is that of Putative pyruvate, phosphate dikinase regulatory protein from Clostridioides difficile (strain 630) (Peptoclostridium difficile).